The chain runs to 210 residues: Phosphoheptose isomerase (210 aa).

Residues 38 to 202 (IAACLARGGK…ENVAALAPYL (165 aa)) form the SIS domain. A substrate-binding site is contributed by 53–55 (NGG). Zn(2+)-binding residues include His-62 and Glu-66. Substrate-binding positions include Glu-66, 95-96 (ND), 121-123 (STS), Ser-126, and Gln-173. 2 residues coordinate Zn(2+): Gln-173 and His-181.

Belongs to the SIS family. GmhA subfamily. Homotetramer. Zn(2+) is required as a cofactor.

Its subcellular location is the cytoplasm. It catalyses the reaction 2 D-sedoheptulose 7-phosphate = D-glycero-alpha-D-manno-heptose 7-phosphate + D-glycero-beta-D-manno-heptose 7-phosphate. It participates in carbohydrate biosynthesis; D-glycero-D-manno-heptose 7-phosphate biosynthesis; D-glycero-alpha-D-manno-heptose 7-phosphate and D-glycero-beta-D-manno-heptose 7-phosphate from sedoheptulose 7-phosphate: step 1/1. Catalyzes the isomerization of sedoheptulose 7-phosphate in D-glycero-D-manno-heptose 7-phosphate. This chain is Phosphoheptose isomerase, found in Desulfovibrio desulfuricans (strain ATCC 27774 / DSM 6949 / MB).